The sequence spans 58 residues: Ribulose bisphosphate carboxylase large chain (58 aa).

Positions Met1 to Ser2 are excised as a propeptide. Residue Pro3 is modified to N-acetylproline. Lys14 is modified (N6,N6,N6-trimethyllysine).

The protein belongs to the RuBisCO large chain family. Type I subfamily. In terms of assembly, heterohexadecamer of 8 large chains and 8 small chains.

It localises to the plastid. It is found in the chloroplast. It carries out the reaction 2 (2R)-3-phosphoglycerate + 2 H(+) = D-ribulose 1,5-bisphosphate + CO2 + H2O. The enzyme catalyses D-ribulose 1,5-bisphosphate + O2 = 2-phosphoglycolate + (2R)-3-phosphoglycerate + 2 H(+). RuBisCO catalyzes two reactions: the carboxylation of D-ribulose 1,5-bisphosphate, the primary event in carbon dioxide fixation, as well as the oxidative fragmentation of the pentose substrate in the photorespiration process. Both reactions occur simultaneously and in competition at the same active site. This chain is Ribulose bisphosphate carboxylase large chain (rbcL), found in Weinmannia silvicola (Towai).